An 838-amino-acid polypeptide reads, in one-letter code: Transient receptor potential cation channel subfamily V member 1 (838 aa).

Disordered regions lie at residues 1–63 and 86–109; these read MEQR…PLDC and RPGDGPASVRPSSQDSVSAGEKPP. The Cytoplasmic portion of the chain corresponds to 1–432; sequence MEQRASLDSE…QDKWDRFVKR (432 aa). An ANK 1 repeat occupies 110–138; sequence RLYDRRSIFDAVAQSNCQELESLLPFLQR. Position 115 (arginine 115) interacts with ATP. Serine 116 carries the phosphoserine; by PKA and PKD modification. Threonine 144 bears the Phosphothreonine; by PKA; in vitro mark. One copy of the ANK 2 repeat lies at 153-185; it reads TGKTCLLKAMLNLHNGQNDTIALLLDVARKTDS. ATP contacts are provided by residues lysine 155, lysine 160, asparagine 164, 199–202, and 210–211; these read YKGQ and ER. 4 ANK repeats span residues 203-228, 249-276, 285-321, and 335-358; these read TALHIAIERRNMTLVTLLVENGADVQ, ELPLSLAACTNQLAIVKFLLQNSWQPAD, NTVLHALVEVADNTVDNTKFVTSMYNEILILGAKLHP, and TPLALAASSGKIGVLAYILQREIH. The residue at position 370 (threonine 370) is a Phosphothreonine; by PKA; in vitro. One copy of the ANK 7 repeat lies at 393–415; it reads NSVLEVIAYSSSETPNRHDMLLV. A helical membrane pass occupies residues 433–453; it reads IFYFNFFVYCLYMIIFTAAAY. At 454–471 the chain is on the extracellular side; it reads YRPVEGLPPYKLKNTVGD. A helical membrane pass occupies residues 472–497; it reads YFRVTGEILSVSGGVYFFFRGIQYFL. Residues 498-510 lie on the Cytoplasmic side of the membrane; that stretch reads QRRPSLKSLFVDS. Serine 502 is subject to Phosphoserine; by PKC/PRKCE. 511 to 512 contacts resiniferatoxin; sequence YS. Residues 511 to 531 form a helical membrane-spanning segment; it reads YSEILFFVQSLFMLVSVVLYF. Residues 532–535 are Extracellular-facing; sequence SQRK. Residues 536–556 traverse the membrane as a helical segment; it reads EYVASMVFSLAMGWTNMLYYT. The resiniferatoxin site is built by threonine 550 and arginine 557. Over 557-571 the chain is Cytoplasmic; sequence RGFQQMGIYAVMIEK. The helical transmembrane segment at 572-599 threads the bilayer; that stretch reads MILRDLCRFMFVYLVFLFGFSTAVVTLI. Residues 600–626 lie on the Extracellular side of the membrane; sequence EDGKNNSLPMESTPHKCRGSACKPGNS. An N-linked (GlcNAc...) asparagine glycan is attached at asparagine 604. The segment at residues 627–649 is an intramembrane region (pore-forming); the sequence is YNSLYSTCLELFKFTIGMGDLEF. Glycine 643 contacts Na(+). The Selectivity filter motif lies at 643 to 646; sequence GMGD. Residue aspartate 646 participates in Ca(2+) binding. At 650-657 the chain is on the extracellular side; the sequence is TENYDFKA. The helical transmembrane segment at 658-686 threads the bilayer; the sequence is VFIILLLAYVILTYILLLNMLIALMGETV. Residues 684 to 712 form an AD region; sequence ETVNKIAQESKNIWKLQRAITILDTEKSF. The Cytoplasmic segment spans residues 687–838; that stretch reads NKIAQESKNI…FKDSMVPGEK (152 aa). Threonine 704 is subject to Phosphothreonine. Residues 767 to 801 form an interaction with calmodulin region; the sequence is EGVKRTLSFSLRSGRVSGRNWKNFALVPLLRDAST. Serine 774 is subject to Phosphoserine; by PKA; in vitro. The segment at 777–792 is required for PIP2-mediated channel inhibition; that stretch reads LRSGRVSGRNWKNFAL. Phosphoserine; by PKC/PRKCE and PKC/PRKCZ is present on serine 800. Serine 820 is modified (phosphoserine; by PKA; in vitro).

This sequence belongs to the transient receptor (TC 1.A.4) family. TrpV subfamily. TRPV1 sub-subfamily. Homotetramer. Interacts with PIRT. May also form a heteromeric channel with TRPV3. Interacts with CALM, PRKCM and CSK. Interacts with PRKCG and NTRK1, probably by forming a trimeric complex. Interacts with the Scolopendra mutilans RhTx toxin. Interacts with the spider Tau-theraphotoxin-Hs1a. Interacts with TMEM100. Interacts with PACS2. In terms of processing, phosphorylation by PKA reverses capsaicin-induced dephosphorylation at multiple sites, probably including Ser-116 as a major phosphorylation site. Phosphorylation by CAMKII seems to regulate binding to vanilloids. Phosphorylated and modulated by PRKCE, PRKCM and probably PRKCZ. Dephosphorylation by calcineurin seems to lead to receptor desensitization and phosphorylation by CAMKII recovers activity. In terms of tissue distribution, predominantly expressed in trigeminal and dorsal root sensory ganglia. Expressed also in hippocampus, cortex, cerebellum, olfactory bulb, mesencephalon and hindbrain. High expression in the cell bodies and dendrites of neurons in the hippocampus and in the cortex. In the brain detected also in astrocytes and pericytes (at protein level). Isoform 1 and isoform 3 are expressed in brain and peripheral blood mononuclear cells.

The protein localises to the postsynaptic cell membrane. It is found in the cell projection. Its subcellular location is the dendritic spine membrane. The protein resides in the cell membrane. The catalysed reaction is Ca(2+)(in) = Ca(2+)(out). It catalyses the reaction Mg(2+)(in) = Mg(2+)(out). It carries out the reaction Na(+)(in) = Na(+)(out). The enzyme catalyses K(+)(in) = K(+)(out). With respect to regulation, channel activity is activated via the interaction with PIRT and phosphatidylinositol 4,5-bisphosphate (PIP2). Both PIRT and PIP2 are required to activate channel activity. The channel is sensitized by ATP binding. Repeated stimulation with capsaicin gives rise to progressively smaller responses, due to desensitization. This desensitization is triggered by the influx of calcium ions and is inhibited by elevated ATP levels. Ca(2+) and CALM displace ATP from its binding site and trigger a conformation change that leads to a closed, desensitized channel. Intracellular PIP2 inhibits desensitization. The double-knot toxin (DkTx) from the Chinese earth tiger tarantula activates the channel and traps it in an open conformation. The Scolopendra mutilans RhTx toxin potentiates the heat activation pathway mediated by this channel by binding to the charge-rich outer pore region (in an activated state). Non-selective calcium permeant cation channel involved in detection of noxious chemical and thermal stimuli. Seems to mediate proton influx and may be involved in intracellular acidosis in nociceptive neurons. Involved in mediation of inflammatory pain and hyperalgesia. Sensitized by a phosphatidylinositol second messenger system activated by receptor tyrosine kinases, which involves PKC isozymes and PCL. Activation by vanilloids, like capsaicin, and temperatures higher than 42 degrees Celsius. Upon activation, exhibits a time- and Ca(2+)-dependent outward rectification, followed by a long-lasting refractory state. Mild extracellular acidic pH (6.5) potentiates channel activation by noxious heat and vanilloids, whereas acidic conditions (pH &lt;6) directly activate the channel. Can be activated by endogenous compounds, including 12-hydroperoxytetraenoic acid and bradykinin. Acts as ionotropic endocannabinoid receptor with central neuromodulatory effects. Triggers a form of long-term depression (TRPV1-LTD) mediated by the endocannabinoid anandamine in the hippocampus and nucleus accumbens by affecting AMPA receptors endocytosis. Functionally, does not display channel activity in response to noxious chemical compounds, such as capsaicin and the vanilloid resiniferatoxin. Channel activity is not elicited by mildly acidic extracellular pH, and only slight channel activity is observed in response to noxiuos heat stimuli. The sequence is that of Transient receptor potential cation channel subfamily V member 1 (Trpv1) from Rattus norvegicus (Rat).